Reading from the N-terminus, the 178-residue chain is ATP synthase subunit delta (178 aa).

It belongs to the ATPase delta chain family. F-type ATPases have 2 components, F(1) - the catalytic core - and F(0) - the membrane proton channel. F(1) has five subunits: alpha(3), beta(3), gamma(1), delta(1), epsilon(1). F(0) has three main subunits: a(1), b(2) and c(10-14). The alpha and beta chains form an alternating ring which encloses part of the gamma chain. F(1) is attached to F(0) by a central stalk formed by the gamma and epsilon chains, while a peripheral stalk is formed by the delta and b chains.

It localises to the cell inner membrane. F(1)F(0) ATP synthase produces ATP from ADP in the presence of a proton or sodium gradient. F-type ATPases consist of two structural domains, F(1) containing the extramembraneous catalytic core and F(0) containing the membrane proton channel, linked together by a central stalk and a peripheral stalk. During catalysis, ATP synthesis in the catalytic domain of F(1) is coupled via a rotary mechanism of the central stalk subunits to proton translocation. In terms of biological role, this protein is part of the stalk that links CF(0) to CF(1). It either transmits conformational changes from CF(0) to CF(1) or is implicated in proton conduction. The polypeptide is ATP synthase subunit delta (Chromobacterium violaceum (strain ATCC 12472 / DSM 30191 / JCM 1249 / CCUG 213 / NBRC 12614 / NCIMB 9131 / NCTC 9757 / MK)).